Reading from the N-terminus, the 527-residue chain is MPMDFQPTSSHSNWVVQKFGGTSVGKFPVQIVDDIVKHYSKPDGPNNNVAVVCSARSSYTKAEGTTSRLLKCCDLASQESEFQDIIEVIRQDHIDNADRFILNPALQAKLVDDTNKELELVKKYLNASKVLGEVSSRTVDLVMSCGEKLSCLFMTALCNDRGCKAKYVDLSHIVPSDFSASALDNSFYTFLVQALKEKLAPFVSAKERIVPVFTGFFGLVPTGLLNGVGRGYTDLCAALIAVAVNADELQVWKEVDGIFTADPRKVPEARLLDSVTPEEASELTYYGSEVIHPFTMEQVIRAKIPIRIKNVQNPLGNGTIIYPDNVAKKGESTPPHPPENLSSSFYEKRKRGATAITTKNDIFVINIHSNKKTLSHGFLAQIFTILDKYKLVVDLISTSEVHVSMALPIPDADSLKSLRQAEEKLRILGSVDITKKLSIVSLVGKHMKQYIGIAGTMFTTLAEEGINIEMISQGANEINISCVINESDSIKALQCIHAKLLSERTNTSNQFEHAIDERLEQLKRLGI.

The residue at position 333 (threonine 333) is a Phosphothreonine. The 86-residue stretch at 442–527 (LVGKHMKQYI…RLEQLKRLGI (86 aa)) folds into the ACT domain.

It belongs to the aspartokinase family. In terms of assembly, homohexamer. Interacts with FPR1; the interaction is direct, plays a role in feedback inhibition of aspartokinase by threonine, and inhibited by tacrolimus and sirolimus.

It catalyses the reaction L-aspartate + ATP = 4-phospho-L-aspartate + ADP. The protein operates within amino-acid biosynthesis; L-methionine biosynthesis via de novo pathway; L-homoserine from L-aspartate: step 1/3. It functions in the pathway amino-acid biosynthesis; L-threonine biosynthesis; L-threonine from L-aspartate: step 1/5. With respect to regulation, allosterically inhibited by threonine. In terms of biological role, phosphorylates aspartate, the first step in the biosynthesis of amino acids that derive from aspartate (the aspartate family of amino acids), including methioinine and threonine, the latter of which is a precursor to isoleucine. This is Aspartokinase (HOM3) from Saccharomyces cerevisiae (strain ATCC 204508 / S288c) (Baker's yeast).